The following is a 364-amino-acid chain: Capsular polysaccharide phosphotransferase fcs1 (364 aa).

Belongs to the stealth family.

In terms of biological role, part of a group II capsule biosynthesis locus. This is Capsular polysaccharide phosphotransferase fcs1 (fcs1) from Haemophilus influenzae.